The primary structure comprises 223 residues: DNA replication complex GINS protein SLD5 (223 aa).

N-acetylmethionine is present on Met1. Thr2 is subject to N-acetylthreonine; in DNA replication complex GINS protein SLD5, N-terminally processed. 2 positions are modified to phosphoserine: Ser12 and Ser16. The tract at residues 166-223 is important for GINS complex assembly; the sequence is DLDSYVFLRVKERQENILVEPEADEQRDYVIDLEVGSQHLIRYKTIAPLVASGAVQLI.

Belongs to the GINS4/SLD5 family. As to quaternary structure, component of the CMG helicase complex, a hexameric ring of related MCM2-7 subunits stabilized by CDC45 and the tetrameric GINS complex. Associated with ORC2. Interacts with HELB. As to expression, highly abundant in testis. Weakly expressed in thymus and bone marrow.

The protein localises to the nucleus. It is found in the chromosome. The protein resides in the cytoplasm. Functionally, required for initiation of chromosomal DNA replication. Core component of CDC45-MCM-GINS (CMG) helicase, the molecular machine that unwinds template DNA during replication, and around which the replisome is built. This Mus musculus (Mouse) protein is DNA replication complex GINS protein SLD5 (Gins4).